Reading from the N-terminus, the 496-residue chain is Cytochrome P450 71D180 (496 aa).

The chain crosses the membrane as a helical; Signal-anchor for type II membrane protein span at residues 1-21; the sequence is MDISISWVVIIVFVLSYLILM. Residue Cys-435 participates in heme binding. Residues 471-496 form a disordered region; the sequence is MSETPGLSGPRKNPLIMIPTIHNPTS.

Belongs to the cytochrome P450 family. Heme serves as cofactor. Mostly expressed in flowers and stems, and, to a lower extent, in leaves.

Its subcellular location is the membrane. It carries out the reaction gamma-terpinene + 2 reduced [NADPH--hemoprotein reductase] + 2 O2 = carvacrol + 2 oxidized [NADPH--hemoprotein reductase] + 3 H2O + 2 H(+). The catalysed reaction is (4S)-limonene + reduced [NADPH--hemoprotein reductase] + O2 = (1S,5R)-carveol + oxidized [NADPH--hemoprotein reductase] + H2O + H(+). It catalyses the reaction (4R)-limonene + reduced [NADPH--hemoprotein reductase] + O2 = (1R,5S)-carveol + oxidized [NADPH--hemoprotein reductase] + H2O + H(+). It participates in secondary metabolite biosynthesis; terpenoid biosynthesis. In terms of biological role, involved in the biosynthesis of phenolic monoterpenes natural products thymol and carvacrol which have a broad range of biological activities acting as antimicrobial compounds, insecticides, antioxidants and pharmaceutical agents. Catalyzes the C2-hydroxylation of gamma-terpinene to produce carvacrol. Also mediates the C6-hydroxylation of (4S)-limonene and (4R)-limonene to form carveol. This Origanum vulgare (Wild marjoram) protein is Cytochrome P450 71D180.